The sequence spans 77 residues: Secapin (77 aa).

A signal peptide spans methionine 1–alanine 32. The propeptide occupies valine 33–arginine 52. A disulfide bridge links cysteine 61 with cysteine 72.

Belongs to the secapin family. In terms of tissue distribution, expressed by the venom gland.

It localises to the secreted. Nontoxic peptide. This chain is Secapin, found in Vespa velutina nigrithorax (Hornet).